We begin with the raw amino-acid sequence, 286 residues long: MSAIDDLPPLREVIREHQLSARKALGQNFLLDLNLTARIARAAGPLEDATVVEIGPGPGGLTRALLALGARHVIAVEHDERAIPALQAIAERYPGRLEIVCTDARTFDVRPYLGSTKAKIVANLPYNIATHLLIGWLSAEPWPPWYDMMVLMFQREVAERIVARENEEAYGRLGVLANWRCETKILFDISPSAFVPPPKVTSSVVRLVPRTAPEPCDRRALEQVAAAAFGQRRKMLRQSLKSLPTDPARLAAAAGVDPTRRAETIPVSGFVAMARELTNSRDDNKT.

S-adenosyl-L-methionine is bound by residues N28, L30, G55, E77, D103, and N123.

Belongs to the class I-like SAM-binding methyltransferase superfamily. rRNA adenine N(6)-methyltransferase family. RsmA subfamily.

It localises to the cytoplasm. The catalysed reaction is adenosine(1518)/adenosine(1519) in 16S rRNA + 4 S-adenosyl-L-methionine = N(6)-dimethyladenosine(1518)/N(6)-dimethyladenosine(1519) in 16S rRNA + 4 S-adenosyl-L-homocysteine + 4 H(+). Specifically dimethylates two adjacent adenosines (A1518 and A1519) in the loop of a conserved hairpin near the 3'-end of 16S rRNA in the 30S particle. May play a critical role in biogenesis of 30S subunits. The chain is Ribosomal RNA small subunit methyltransferase A from Bradyrhizobium sp. (strain BTAi1 / ATCC BAA-1182).